The following is a 173-amino-acid chain: Alpha-crystallin B chain (173 aa).

Met-1 is modified (N-acetylmethionine). The sHSP domain maps to 54–162; the sequence is RLPSWIESGL…PERSIPITRE (109 aa). The Zn(2+) site is built by His-81, His-102, Glu-104, and His-109.

It belongs to the small heat shock protein (HSP20) family. As to quaternary structure, heteromer composed of three CRYAA and one CRYAB subunits. Aggregates with homologous proteins, including the small heat shock protein HSPB1, to form large heteromeric complexes. Inter-subunit bridging via zinc ions enhances stability, which is crucial as there is no protein turn over in the lens.

In terms of biological role, may contribute to the transparency and refractive index of the lens. This is Alpha-crystallin B chain (CRYAB) from Aquarana catesbeiana (American bullfrog).